The following is a 200-amino-acid chain: HTH-type transcriptional regulator BetI (200 aa).

One can recognise an HTH tetR-type domain in the interval 8–68; sequence DIRKPQLVQA…ETMREILRQL (61 aa). Residues 31–50 constitute a DNA-binding region (H-T-H motif); sequence SIALISKEAGVSTGIINHYF.

The protein operates within amine and polyamine biosynthesis; betaine biosynthesis via choline pathway [regulation]. Repressor involved in the biosynthesis of the osmoprotectant glycine betaine. It represses transcription of the choline transporter BetT and the genes of BetAB involved in the synthesis of glycine betaine. This is HTH-type transcriptional regulator BetI from Vibrio atlanticus (strain LGP32) (Vibrio splendidus (strain Mel32)).